A 402-amino-acid chain; its full sequence is Formate-dependent phosphoribosylglycinamide formyltransferase (402 aa).

Residues 22 to 23 (EL) and Glu-82 contribute to the N(1)-(5-phospho-beta-D-ribosyl)glycinamide site. ATP-binding positions include Arg-115, Lys-160, 165 to 170 (SSGKGQ), 200 to 203 (EGFV), and Glu-208. The ATP-grasp domain maps to 120–318 (RLAAETLGLP…EFELHARAIL (199 aa)). Residues Glu-277 and Glu-289 each coordinate Mg(2+). N(1)-(5-phospho-beta-D-ribosyl)glycinamide contacts are provided by residues Asp-296, Lys-365, and 372–373 (RR).

This sequence belongs to the PurK/PurT family. As to quaternary structure, homodimer.

It carries out the reaction N(1)-(5-phospho-beta-D-ribosyl)glycinamide + formate + ATP = N(2)-formyl-N(1)-(5-phospho-beta-D-ribosyl)glycinamide + ADP + phosphate + H(+). Its pathway is purine metabolism; IMP biosynthesis via de novo pathway; N(2)-formyl-N(1)-(5-phospho-D-ribosyl)glycinamide from N(1)-(5-phospho-D-ribosyl)glycinamide (formate route): step 1/1. Functionally, involved in the de novo purine biosynthesis. Catalyzes the transfer of formate to 5-phospho-ribosyl-glycinamide (GAR), producing 5-phospho-ribosyl-N-formylglycinamide (FGAR). Formate is provided by PurU via hydrolysis of 10-formyl-tetrahydrofolate. This Mycobacteroides abscessus (strain ATCC 19977 / DSM 44196 / CCUG 20993 / CIP 104536 / JCM 13569 / NCTC 13031 / TMC 1543 / L948) (Mycobacterium abscessus) protein is Formate-dependent phosphoribosylglycinamide formyltransferase.